Reading from the N-terminus, the 383-residue chain is DNA dC-&gt;dU-editing enzyme APOBEC-3G (383 aa).

Residues methionine 1–serine 60 form an essential for cytoplasmic localization region. 2 consecutive CMP/dCMP-type deaminase domains span residues arginine 29–leucine 138 and glycine 214–leucine 327. Position 32 is a phosphothreonine; by PKA (threonine 32). Histidine 65, cysteine 97, and cysteine 100 together coordinate Zn(2+). Positions lysine 209–alanine 335 are necessary for homooligomerization. The tract at residues serine 213 to glutamine 215 is interaction with DNA. Threonine 218 bears the Phosphothreonine; by PKA and CAMK2 mark. A Zn(2+)-binding site is contributed by histidine 257. Glutamate 259 functions as the Proton donor in the catalytic mechanism. Residues cysteine 287 and cysteine 290 each coordinate Zn(2+). The interaction with DNA stretch occupies residues arginine 312–arginine 319.

Belongs to the cytidine and deoxycytidylate deaminase family. In terms of assembly, homodimer. Zn(2+) is required as a cofactor.

The protein localises to the cytoplasm. Its subcellular location is the nucleus. It is found in the P-body. It carries out the reaction a 2'-deoxycytidine in single-stranded DNA + H2O + H(+) = a 2'-deoxyuridine in single-stranded DNA + NH4(+). Functionally, DNA deaminase (cytidine deaminase) which acts as an inhibitor of retrovirus replication and retrotransposon mobility. After the penetration of retroviral nucleocapsids into target cells of infection and the initiation of reverse transcription, it can induce the conversion of cytosine to uracil in the minus-sense single-strand viral DNA, leading to G-to-A hypermutations in the subsequent plus-strand viral DNA. The resultant detrimental levels of mutations in the proviral genome, along with a deamination-independent mechanism that works prior to the proviral integration, together exert efficient antiretroviral effects in infected target cells. Selectively targets single-stranded DNA and does not deaminate double-stranded DNA or single- or double-stranded RNA. The sequence is that of DNA dC-&gt;dU-editing enzyme APOBEC-3G (APOBEC3G) from Papio anubis (Olive baboon).